The sequence spans 1070 residues: RecBCD enzyme subunit RecC (1070 aa).

Belongs to the RecC family. As to quaternary structure, heterotrimer of RecB, RecC and RecD. All subunits contribute to DNA-binding.

A helicase/nuclease that prepares dsDNA breaks (DSB) for recombinational DNA repair. Binds to DSBs and unwinds DNA via a highly rapid and processive ATP-dependent bidirectional helicase activity. Unwinds dsDNA until it encounters a Chi (crossover hotspot instigator) sequence from the 3' direction. Cuts ssDNA a few nucleotides 3' to the Chi site. The properties and activities of the enzyme are changed at Chi. The Chi-altered holoenzyme produces a long 3'-ssDNA overhang and facilitates RecA-binding to the ssDNA for homologous DNA recombination and repair. Holoenzyme degrades any linearized DNA that is unable to undergo homologous recombination. In the holoenzyme this subunit recognizes the wild-type Chi sequence, and when added to isolated RecB increases its ATP-dependent helicase processivity. The polypeptide is RecBCD enzyme subunit RecC (Buchnera aphidicola subsp. Acyrthosiphon pisum (strain APS) (Acyrthosiphon pisum symbiotic bacterium)).